A 193-amino-acid chain; its full sequence is Probable nicotinate-nucleotide adenylyltransferase (193 aa).

It belongs to the NadD family.

It catalyses the reaction nicotinate beta-D-ribonucleotide + ATP + H(+) = deamido-NAD(+) + diphosphate. It functions in the pathway cofactor biosynthesis; NAD(+) biosynthesis; deamido-NAD(+) from nicotinate D-ribonucleotide: step 1/1. Functionally, catalyzes the reversible adenylation of nicotinate mononucleotide (NaMN) to nicotinic acid adenine dinucleotide (NaAD). This Flavobacterium psychrophilum (strain ATCC 49511 / DSM 21280 / CIP 103535 / JIP02/86) protein is Probable nicotinate-nucleotide adenylyltransferase.